Here is a 406-residue protein sequence, read N- to C-terminus: Argininosuccinate synthase (406 aa).

ATP is bound by residues A11–S19 and A38. Positions 91 and 96 each coordinate L-citrulline. G121 lines the ATP pocket. Positions 123, 127, and 128 each coordinate L-aspartate. L-citrulline is bound at residue N127. Residues R131, S182, S191, E267, and Y279 each contribute to the L-citrulline site.

It belongs to the argininosuccinate synthase family. Type 1 subfamily. Homotetramer.

Its subcellular location is the cytoplasm. It catalyses the reaction L-citrulline + L-aspartate + ATP = 2-(N(omega)-L-arginino)succinate + AMP + diphosphate + H(+). It functions in the pathway amino-acid biosynthesis; L-arginine biosynthesis; L-arginine from L-ornithine and carbamoyl phosphate: step 2/3. The sequence is that of Argininosuccinate synthase from Rhodospirillum centenum (strain ATCC 51521 / SW).